The primary structure comprises 3595 residues: Replicase polyprotein 1ab (3595 aa).

Residues 3-23 (CECPRSNLVVMCSGAFCCVLC) form a C4-type; atypical zinc finger. The Peptidase C31 domain maps to 56–164 (SGLEGRYCAL…PTTIPFNTTG (109 aa)). Catalysis depends on for Nsp1-alpha papain-like cysteine proteinase activity residues cysteine 63 and histidine 130. The 112-residue stretch at 239-350 (LSFEHGRCWL…LKLPGKTYFG (112 aa)) folds into the Peptidase C32 domain. Residues cysteine 246 and histidine 309 each act as for Nsp1-beta papain-like cysteine proteinase activity in the active site. Active-site for Nsp2 cysteine proteinase activity residues include cysteine 378 and histidine 430. The tract at residues 482–527 (RRGGGKKSGQSSGVRAPGRTTPDLAGDWGKAVDDQEKTASKVTTDK) is disordered. Over residues 511-520 (KAVDDQEKTA) the composition is skewed to basic and acidic residues. Positions 633 to 736 (TFIPPPDGGC…HGWCSSLLSE (104 aa)) constitute a Peptidase C33 domain. The interval 808-862 (QVRTVDPSQPAAPLPPVPRPRKRKAAAQQVSKVPSEQDPSLAHDPPEKPDSVRPP) is disordered. Basic and acidic residues predominate over residues 851 to 860 (DPPEKPDSVR). 7 helical membrane-spanning segments follow: residues 922-942 (MFFL…AGVI), 951-971 (ILCC…AISS), 1019-1039 (VALF…VIGV), 1239-1259 (IFRT…GYWV), 1316-1336 (PYIV…PGII), 1345-1365 (ALLP…IIAA), and 1381-1401 (AFVD…GWIL). The tract at residues 922–1039 (MFFLFLGSPL…MVDVLLVIGV (118 aa)) is HD1. The tract at residues 1239-1399 (IFRTALAAAW…VVLTALLVGW (161 aa)) is HD2. The 201-residue stretch at 1464-1664 (GLLREKTRAS…RLLESSINLE (201 aa)) folds into the Peptidase S32 domain. Active-site charge relay system; for 3C-like serine proteinase activity residues include histidine 1502, aspartate 1527, and serine 1580. Helical transmembrane passes span 1673-1693 (IIVA…PFVV), 1711-1731 (YNYS…IFFI), 1744-1764 (ALIC…IILG), and 1784-1804 (AIAI…LELF). The tract at residues 1687-1804 (LSIPFVVAFF…CVAACCLELF (118 aa)) is HD3. The 171-residue stretch at 2083-2253 (DMNRLRAIIS…YPYKLHPVRG (171 aa)) folds into the NiRAN domain. In terms of domain architecture, RdRp catalytic spans 2491 to 2625 (GRCLETDLAS…LNESDDLPNF (135 aa)). Positions 2746–2812 (GKEVQVCSIC…IPILKDRTKF (67 aa)) constitute an AV ZBD domain. Positions 2752, 2755, 2765, 2770, 2773, 2777, 2779, 2782, 2789, 2791, 2798, and 2801 each coordinate Zn(2+). One can recognise a (+)RNA virus helicase ATP-binding domain in the interval 2862–3022 (DLPDGKYSMK…VFELMKKNAL (161 aa)). 2897 to 2904 (GPPGSGKT) serves as a coordination point for ATP. The 135-residue stretch at 3023 to 3157 (HAIYRFGQNI…DGKARVMLSD (135 aa)) folds into the (+)RNA virus helicase C-terminal domain. Residues 3196–3292 (SGSLSPLPRV…LTKFLDGRAV (97 aa)) enclose the AV-Nsp11N/CoV-Nsp15M domain. The 123-residue stretch at 3294–3416 (MEDSVYSTGR…MVWRDQTMYF (123 aa)) folds into the NendoU domain. Residues histidine 3325, histidine 3340, and lysine 3369 contribute to the active site.

Belongs to the arteriviridae polyprotein family. Post-translationally, specific enzymatic cleavages in vivo by its own proteases yield mature proteins. There are two alternative pathways for processing. Either nsp4-5 is cleaved, which represents the major pathway or the nsp5-6 and nsp6-7 are processed, which represents the minor pathway. The major pathway occurs when nsp2 acts as a cofactor for nsp4.

Its subcellular location is the host membrane. The protein localises to the host cytoplasm. It localises to the host perinuclear region. It catalyses the reaction RNA(n) + a ribonucleoside 5'-triphosphate = RNA(n+1) + diphosphate. It carries out the reaction ATP + H2O = ADP + phosphate + H(+). The catalysed reaction is uridylyl-uridylyl-ribonucleotide-RNA = a 3'-end uridylyl-2',3'-cyclophospho-uridine-RNA + a 5'-end dephospho-ribonucleoside-RNA. Functionally, the replicase polyprotein 1ab is a multifunctional protein: it contains the activities necessary for the transcription of negative stranded RNA, leader RNA, subgenomic mRNAs and progeny virion RNA as well as proteinases responsible for the cleavage of the polyprotein into functional products. In terms of biological role, the Nsp1 chain is essential for viral subgenomic mRNA synthesis. Its function is as follows. The 3C-like serine proteinase chain is responsible for the majority of cleavages as it cleaves the C-terminus of the polyprotein. Plays a role in viral transcription/replication and prevents the simultaneous activation of host cell dsRNA sensors, such as MDA5/IFIH1, OAS, and PKR. Acts by degrading the 5'-polyuridines generated during replication of the poly(A) region of viral genomic and subgenomic RNAs. Catalyzes a two-step reaction in which a 2'3'-cyclic phosphate (2'3'-cP) is first generated by 2'-O transesterification, which is then hydrolyzed to a 3'-phosphate (3'-P). If not degraded, poly(U) RNA would hybridize with poly(A) RNA tails and activate host dsRNA sensors. Functionally, the helicase chain, which contains a zinc finger structure, displays RNA and DNA duplex-unwinding activities with 5' to 3' polarity. The protein is Replicase polyprotein 1ab (rep) of Simian hemorrhagic fever virus (SHFV).